Consider the following 38-residue polypeptide: MKVRSSVKKISPDDQIVRRRGKIYVINKKRPRNKQRQG.

Belongs to the bacterial ribosomal protein bL36 family.

This is Large ribosomal subunit protein bL36 from Prochlorococcus marinus (strain MIT 9312).